Here is a 150-residue protein sequence, read N- to C-terminus: Large ribosomal subunit protein bL9 (150 aa).

The protein belongs to the bacterial ribosomal protein bL9 family.

Binds to the 23S rRNA. This Streptococcus pyogenes serotype M5 (strain Manfredo) protein is Large ribosomal subunit protein bL9.